Consider the following 275-residue polypeptide: 2,3,4,5-tetrahydropyridine-2,6-dicarboxylate N-succinyltransferase (275 aa).

This sequence belongs to the transferase hexapeptide repeat family.

The protein localises to the cytoplasm. The catalysed reaction is (S)-2,3,4,5-tetrahydrodipicolinate + succinyl-CoA + H2O = (S)-2-succinylamino-6-oxoheptanedioate + CoA. The protein operates within amino-acid biosynthesis; L-lysine biosynthesis via DAP pathway; LL-2,6-diaminopimelate from (S)-tetrahydrodipicolinate (succinylase route): step 1/3. In Paraburkholderia phymatum (strain DSM 17167 / CIP 108236 / LMG 21445 / STM815) (Burkholderia phymatum), this protein is 2,3,4,5-tetrahydropyridine-2,6-dicarboxylate N-succinyltransferase.